The sequence spans 1242 residues: Structural polyprotein (1242 aa).

Residues 14-101 form a disordered region; the sequence is WRPRMPPRPW…PKRKPGRRER (88 aa). Residues 26–42 are compositionally biased toward low complexity; the sequence is RMPTMQRPDQQARQMQQ. The host transcription inhibition stretch occupies residues 35 to 66; the sequence is QQARQMQQLIAAVSTLALRQNAAAPQRGKKKQ. Positions 59–96 match the Nuclear localization signal motif; that stretch reads PQRGKKKQPRRKKPKPQPEKPKKQEQKPKQKKAPKRKP. The span at 61 to 73 shows a compositional bias: basic residues; it reads RGKKKQPRRKKPK. Basic and acidic residues predominate over residues 74 to 86; that stretch reads PQPEKPKKQEQKP. The interval 82–111 is binding to the viral RNA; sequence QEQKPKQKKAPKRKPGRRERMCMKIEHDCI. A compositionally biased stretch (basic residues) spans 87 to 98; it reads KQKKAPKRKPGR. The ribosome-binding stretch occupies residues 96–110; that stretch reads PGRRERMCMKIEHDC. The cysteines at positions 110 and 125 are disulfide-linked. A Peptidase S3 domain is found at 110–258; it reads CIFEVKHEGK…KITPEGTVEW (149 aa). Histidine 136 functions as the Charge relay system in the catalytic mechanism. The Nuclear export signal signature appears at 141–151; that stretch reads IDNADLARLSY. The tract at residues 152–157 is interaction with spike glycoprotein E2; sequence KKSSKY. Residue aspartate 158 is the Charge relay system of the active site. The segment at 180-190 is dimerization of the capsid protein; it reads PEGHYNWHYGA. Residue serine 210 is the Charge relay system of the active site. The segment at 216–220 is dimerization of the capsid protein; the sequence is DNKGP. The interval 259-272 is functions as an uncleaved signal peptide for the precursor of protein E3/E2; it reads AASTVTAMCLLTNI. 8 disulfide bridges follow: cysteine 267/cysteine 276, cysteine 281/cysteine 285, cysteine 284/cysteine 316, cysteine 343/cysteine 449, cysteine 346/cysteine 352, cysteine 415/cysteine 429, cysteine 477/cysteine 589, and cysteine 527/cysteine 544. N-linked (GlcNAc...) asparagine; by host glycosylation occurs at asparagine 271. Residues 325 to 690 lie on the Extracellular side of the membrane; it reads STANHFNAYK…YYYGLHPTTT (366 aa). 2 interaction with host Mxra8 receptor regions span residues 350–353 and 386–388; these read HSCH and HDH. Interaction with host Mxra8 receptor stretches follow at residues 508–511 and 540–546; these read QSGN and TINSCTV. A glycan (N-linked (GlcNAc...) asparagine; by host) is linked at asparagine 586. A helical membrane pass occupies residues 691–711; it reads IVVVIRVSVVVLLSFAASVYM. Topologically, residues 712-746 are cytoplasmic; sequence CVVARTKCLTPYALTPGAVVPVTIGVLCCAPKAHA. Positions 714-718 are interaction with the capsid protein; sequence VARTK. S-palmitoyl cysteine; by host attachment occurs at residues cysteine 719, cysteine 739, and cysteine 740. The tract at residues 719–739 is transient transmembrane before p62-6K protein processing; that stretch reads CLTPYALTPGAVVPVTIGVLC. A disulfide bond links cysteine 719 and cysteine 740. Over 747–761 the chain is Extracellular; it reads ASFAEGMAYLWDNNQ. N-linked (GlcNAc...) asparagine; by host glycosylation occurs at asparagine 760. Residues 762 to 782 traverse the membrane as a helical segment; that stretch reads SMFWMELTGPLALLILATCCA. At 783–785 the chain is on the cytoplasmic side; sequence RSL. A helical membrane pass occupies residues 786–806; sequence LSCCKGSFLVAMSIGSAVASA. Topologically, residues 807–1217 are extracellular; that stretch reads YEHTAIIPNQ…STAMTWAQHL (411 aa). Intrachain disulfides connect cysteine 855-cysteine 920, cysteine 868-cysteine 900, cysteine 869-cysteine 902, and cysteine 874-cysteine 884. Residues 890–907 are E1 fusion peptide loop; sequence VYPFMWGGAYCFCDSENT. Asparagine 947 and asparagine 1076 each carry an N-linked (GlcNAc...) asparagine; by host glycan. Disulfide bonds link cysteine 1065-cysteine 1077, cysteine 1107-cysteine 1180, cysteine 1112-cysteine 1184, and cysteine 1134-cysteine 1174. Residues 1218-1238 form a helical membrane-spanning segment; it reads AGGVGLLIALAVLILVIVTCV. Residue cysteine 1237 is the site of S-palmitoyl cysteine; by host attachment. The Cytoplasmic segment spans residues 1239-1242; sequence TLRR.

In terms of assembly, homodimer. Homomultimer. Interacts with host karyopherin KPNA4; this interaction allows the nuclear import of the viral capsid protein. Interacts with spike glycoprotein E2. Interacts with host IRAK1; the interaction leads to inhibition of IRAK1-dependent signaling. As to quaternary structure, the precursor of protein E3/E2 and E1 form a heterodimer shortly after synthesis. The precursor of protein E3/E2 and E1 form a heterodimer shortly after synthesis. Processing of the precursor of protein E3/E2 into E2 and E3 results in a heterodimer of the spike glycoproteins E2 and E1. Spike at virion surface are constituted of a trimer of E2-E1 heterodimers. After target cell attachment and endocytosis, E1 change conformation to form homotrimers. Interacts with 6K protein. In terms of assembly, interacts with spike glycoprotein E1. Processing of the precursor of protein E3/E2 into E2 and E3 results in a heterodimer of the spike glycoproteins E2 and E1. Spike at virion surface are constituted of a trimer of E2-E1 heterodimers. Interacts with 6K protein. Interacts with host MXRA8; this interaction mediates virus entry. As to quaternary structure, oligomer. Interacts with spike glycoprotein E1. Interacts with spike glycoprotein E2. Post-translationally, structural polyprotein: Specific enzymatic cleavages in vivo yield mature proteins. Capsid protein is auto-cleaved during polyprotein translation, unmasking a signal peptide at the N-terminus of the precursor of E3/E2. The remaining polyprotein is then targeted to the host endoplasmic reticulum, where host signal peptidase cleaves it into pE2, 6K and E1 proteins. pE2 is further processed to mature E3 and E2 by host furin in trans-Golgi vesicle. In terms of processing, palmitoylated via thioester bonds. These palmitoylations may induce disruption of the C-terminus transmembrane. This would result in the reorientation of E2 C-terminus from lumenal to cytoplasmic side. N-glycosylated. Post-translationally, palmitoylated via thioester bonds.

The protein resides in the virion. It localises to the host cytoplasm. The protein localises to the host cell membrane. Its subcellular location is the host nucleus. It is found in the virion membrane. The protein resides in the host Golgi apparatus. It localises to the host trans-Golgi network. The protein localises to the host endoplasmic reticulum. The enzyme catalyses Autocatalytic release of the core protein from the N-terminus of the togavirus structural polyprotein by hydrolysis of a -Trp-|-Ser- bond.. Its function is as follows. Forms an icosahedral capsid with a T=4 symmetry composed of 240 copies of the capsid protein surrounded by a lipid membrane through which penetrate 80 spikes composed of trimers of E1-E2 heterodimers. The capsid protein binds to the viral RNA genome at a site adjacent to a ribosome binding site for viral genome translation following genome release. Possesses a protease activity that results in its autocatalytic cleavage from the nascent structural protein. Following its self-cleavage, the capsid protein transiently associates with ribosomes, and within several minutes the protein binds to viral RNA and rapidly assembles into icosahedric core particles. The resulting nucleocapsid eventually associates with the cytoplasmic domain of the spike glycoprotein E2 at the cell membrane, leading to budding and formation of mature virions. In case of infection, new virions attach to target cells and after clathrin-mediated endocytosis their membrane fuses with the host endosomal membrane. This leads to the release of the nucleocapsid into the cytoplasm, followed by an uncoating event necessary for the genomic RNA to become accessible. The uncoating might be triggered by the interaction of capsid proteins with ribosomes. Binding of ribosomes would release the genomic RNA since the same region is genomic RNA-binding and ribosome-binding. Specifically inhibits interleukin-1 receptor-associated kinase 1/IRAK1-dependent signaling during viral entry, representing a means by which the alphaviruses may evade innate immune detection and activation prior to viral gene expression. Functionally, provides the signal sequence for the translocation of the precursor of protein E3/E2 to the host endoplasmic reticulum. Furin-cleaved E3 remains associated with spike glycoprotein E1 and mediates pH protection of the latter during the transport via the secretory pathway. After virion release from the host cell, the assembly protein E3 is gradually released in the extracellular space. In terms of biological role, plays a role in viral attachment to target host cell, by binding to the cell receptor MXRA8. Synthesized as a p62 precursor which is processed by furin at the cell membrane just before virion budding, giving rise to E2-E1 heterodimer. The p62-E1 heterodimer is stable, whereas E2-E1 is unstable and dissociate at low pH. p62 is processed at the last step, presumably to avoid E1 fusion activation before its final export to cell surface. E2 C-terminus contains a transitory transmembrane that would be disrupted by palmitoylation, resulting in reorientation of the C-terminal tail from lumenal to cytoplasmic side. This step is critical since E2 C-terminus is involved in budding by interacting with capsid proteins. This release of E2 C-terminus in cytoplasm occurs lately in protein export, and precludes premature assembly of particles at the endoplasmic reticulum membrane. Acts as a viroporin that participates in virus glycoprotein processing and transport to the plasma membrane, cell permeabilization and budding of viral particles. Disrupts the calcium homeostasis of the cell, probably at the endoplasmic reticulum level. This leads to cytoplasmic calcium elevation. Because of its lipophilic properties, the 6K protein is postulated to influence the selection of lipids that interact with the transmembrane domains of the glycoproteins, which, in turn, affects the deformability of the bilayer required for the extreme curvature that occurs as budding proceeds. Present in low amount in virions, about 3% compared to viral glycoproteins. Its function is as follows. Class II viral fusion protein. Fusion activity is inactive as long as E1 is bound to E2 in mature virion. After virus attachment to target cell via host MXRA8 and endocytosis, acidification of the endosome induce dissociation of E1/E2 heterodimer and concomitant trimerization of the E1 subunits. This E1 trimer is fusion active, and promotes release of viral nucleocapsid in cytoplasm after endosome and viral membrane fusion. Efficient fusion requires the presence of cholesterol and sphingolipid in the target membrane. This is Structural polyprotein from Mayaro virus (strain Brazil) (MAYV).